Reading from the N-terminus, the 379-residue chain is LIM/homeobox protein Lhx9 (379 aa).

LIM zinc-binding domains are found at residues 51-112 and 113-175; these read TLCA…RFSV and QRCA…LVQG. Disordered stretches follow at residues 232–257 and 310–379; these read ENDT…TSFK and RQEN…TNLF. A compositionally biased stretch (basic residues) spans 248 to 257; that stretch reads KTKRMRTSFK. A DNA-binding region (homeobox) is located at residues 249–308; sequence TKRMRTSFKHHQLRTTKSYFAINHNPDAKDLKQLAQKTGLTKRVLQVWFQNARAKFRRNL. The span at 326–379 shows a compositional bias: polar residues; sequence APASTDSAALTPTGAASTLSDLTSPSLNVGASVTPNMDSHESGSPSQTTLTNLF.

In terms of tissue distribution, isoform 1 and isoform 3 are expressed in ovary, testis, brain and heart. Isoform 4 and isoform 5 are expressed in brain.

It localises to the nucleus. May be involved in gonadal development. This is LIM/homeobox protein Lhx9 (lhx9) from Glandirana rugosa (Japanese wrinkled frog).